A 734-amino-acid chain; its full sequence is MPPEAKRIVVKGFDPRKSRQRQETYYVTMIDRLNMALQVVMAGLGLKTGYQELYSGVENLTRADQASRCFNILQHHMSSGIQLLKDSAESFIQLEGTETDTNACTVVVGCWNKWLERVEIVQNIFYYMDKTFLSHHPDYPTIEELSLSLFREKLMAVKNIQIPFLNSLLQSFENLHSSKSTDHAYLQDAMLMLHRTEMYSSVFVPMYLVMLSRFYDTESSQKIQELPLEEYLEYAMSSLEREDAYVEKFDIVRDKKSIRETVQRCLITSHLDTLTKGISQFIEKRDAHSCKLLYALLQFNHETEYLIQPWSDCLVDVGFKLVNDESKDDTLVQELLSFHKFLQVVVDESFLHDETLSYAMRKAFETFINGAKGSQREAPARLIAKYIDYLLRVGEQASGGKPLKEVFSEILDLFRYIASKDIFEAYYKLDIAKRLLLNKSASAQNELMLLDMLKKTCGSQFTHSLEGMFRDVNISKEFTSSFRHSKAAHNLHRDLYVNVLSQAYWPSYPESHIRLPDDMQQDLDCFEKFYLSKQVGKKISWYASLGHCIVKARFPLGNKELSISLFQACVLLQFNNCLGGEGISYQDLKKSTELSDIDLTRTLQSLSCARIRPLVMVPKSKKPSPDTMFYVNEKFTDKLYRVKINQIYLKEERQENSDVQEQVVRDRQFELQASIVRVMKQKEKMKHDDLVQYVINNVKDRGIPLVSDVKTAIEKLLEKEYLEREDNDIYTYVT.

In terms of domain architecture, Cullin neddylation spans 666–728 (DRQFELQASI…KEYLEREDND (63 aa)). Lys680 is covalently cross-linked (Glycyl lysine isopeptide (Lys-Gly) (interchain with G-Cter in NEDD8)).

The protein belongs to the cullin family. Component of the Clr4 methyltransferase complex (ClrC) composed of at least clr4, rik1, pcu4, rbx1, raf1 and raf2. The cullin pcu4, rik1, raf1, raf2 and the ring-box protein rbx1 are components of an E3 ubiquitin ligase, whose activity is essential for heterochromatin assembly. Post-translationally, neddylated; enhancing the ubiquitin-ligase activity.

It is found in the cytoplasm. It localises to the nucleus. The protein localises to the chromosome. Its pathway is protein modification; protein ubiquitination. Required, indirectly, for activation of ribonucleotide reductase through the degradation of the protein spd1, thereby supplying deoxyribonucleotides for DNA replication and repair. Also has a role as a scaffold for assembling ubiquitin ligases. Component of the Clr4 methyltransferase complex (ClrC) which contributes to the establishment of heterochromatin by specifically methylating histone H3 to form H3K9me. ClrC preferentially ubiquitylates H3K14 and ClrC-mediated H3 ubiquitination promotes clr4 methyltransferase activity for the methylation of H3K9. H3K9me represents a specific tag for epigenetic transcriptional repression by recruiting swi6/HP1 to methylated histones which leads to transcriptional silencing within centromeric heterochromatin, telomeric regions and at the silent mating-type loci. The chain is Cullin-4 (pcu4) from Schizosaccharomyces pombe (strain 972 / ATCC 24843) (Fission yeast).